Here is an 862-residue protein sequence, read N- to C-terminus: Genome polyprotein (862 aa).

The N-myristoyl glycine; by host moiety is linked to residue G2.

It belongs to the picornaviruses polyprotein family. In terms of assembly, interacts with capsid protein VP1 and capsid protein VP3 to form heterotrimeric protomers. As to quaternary structure, interacts with capsid protein VP0, and capsid protein VP3 to form heterotrimeric protomers. Five protomers subsequently associate to form pentamers which serve as building blocks for the capsid. Interacts with capsid protein VP2, capsid protein VP3 and capsid protein VP4 following cleavage of capsid protein VP0. Interacts with capsid protein VP1 and capsid protein VP3 in the mature capsid. In terms of assembly, interacts with capsid protein VP0 and capsid protein VP1 to form heterotrimeric protomers. Five protomers subsequently associate to form pentamers which serve as building blocks for the capsid. Interacts with capsid protein VP4 in the mature capsid. Interacts with protein 2C; this interaction may be important for virion morphogenesis. As to quaternary structure, interacts with capsid protein VP1 and capsid protein VP3. In terms of processing, specific enzymatic cleavages in vivo by the viral proteases yield processing intermediates and the mature proteins. Myristoylation is required for the formation of pentamers during virus assembly. Further assembly of 12 pentamers and a molecule of genomic RNA generates the provirion. Post-translationally, during virion maturation, immature virions are rendered infectious following cleavage of VP0 into VP4 and VP2. This maturation seems to be an autocatalytic event triggered by the presence of RNA in the capsid and it is followed by a conformational change infectious virion. In terms of processing, myristoylation is required during RNA encapsidation and formation of the mature virus particle.

The protein localises to the virion. It localises to the host cytoplasm. Its function is as follows. Forms an icosahedral capsid of pseudo T=3 symmetry with capsid proteins VP2 and VP3. The capsid is 300 Angstroms in diameter, composed of 60 copies of each capsid protein and enclosing the viral positive strand RNA genome. Capsid protein VP1 mainly forms the vertices of the capsid. Capsid protein VP1 interacts with host cell receptor to provide virion attachment to target host cells. This attachment induces virion internalization. Tyrosine kinases are probably involved in the entry process. After binding to its receptor, the capsid undergoes conformational changes. Capsid protein VP1 N-terminus (that contains an amphipathic alpha-helix) and capsid protein VP4 are externalized. Together, they shape a pore in the host membrane through which viral genome is translocated to host cell cytoplasm. In terms of biological role, forms an icosahedral capsid of pseudo T=3 symmetry with capsid proteins VP2 and VP3. The capsid is 300 Angstroms in diameter, composed of 60 copies of each capsid protein and enclosing the viral positive strand RNA genome. Functionally, lies on the inner surface of the capsid shell. After binding to the host receptor, the capsid undergoes conformational changes. Capsid protein VP4 is released, Capsid protein VP1 N-terminus is externalized, and together, they shape a pore in the host membrane through which the viral genome is translocated into the host cell cytoplasm. Component of immature procapsids, which is cleaved into capsid proteins VP4 and VP2 after maturation. Allows the capsid to remain inactive before the maturation step. The protein is Genome polyprotein of Echovirus 16 (strain Harrington).